A 575-amino-acid chain; its full sequence is Manganese transporter SMF1 (575 aa).

Residues 1-70 (MVNVGPSHAA…TYVSKRQVMR (70 aa)) are Extracellular-facing. Ser-24 is subject to Phosphoserine. Glycyl lysine isopeptide (Lys-Gly) (interchain with G-Cter in ubiquitin) cross-links involve residues Lys-33 and Lys-34. A helical membrane pass occupies residues 71–91 (DIFAKYLKFIGPGLMVSVAYI). Topologically, residues 92 to 108 (DPGNYSTAVDAGASNQF) are cytoplasmic. A helical transmembrane segment spans residues 109 to 129 (SLLCIILLSNFIAIFLQCLCI). At 130–156 (KLGSVTGLDLSRACREYLPRWLNWTLY) the chain is on the extracellular side. A helical transmembrane segment spans residues 157 to 177 (FFAECAVIATDIAEVIGTAIA). Topologically, residues 178–179 (LN) are cytoplasmic. Residues 180 to 200 (ILIKVPLPAGVAITVVDVFLI) traverse the membrane as a helical segment. The Extracellular segment spans residues 201–218 (MFTYKPGASSIRFIRIFE). The helical transmembrane segment at 219–239 (CFVAVLVVGVCICFAIELAYI) threads the bilayer. The Cytoplasmic portion of the chain corresponds to 240–266 (PKSTSVKQVFRGFVPSAQMFDHNGIYT). A helical transmembrane segment spans residues 267-287 (AISILGATVMPHSLFLGSALV). Topologically, residues 288–344 (QPRLLDYDVKHGNYTVSEEQDKVKKSKSTEEIMEEKYFNYRPTNAAIKYCMKYSMVE) are extracellular. A helical membrane pass occupies residues 345–365 (LSITLFTLALFVNCAILVVAG). Residues 366-396 (STLYNSPEADGADLFTIHELLSRNLAPAAGT) are Cytoplasmic-facing. A helical membrane pass occupies residues 397–417 (IFMLALLLSGQSAGVVCTMSG). The Extracellular segment spans residues 418–463 (QIVSEGHINWKLQPWQRRLATRCISIIPCLVISICIGREALSKALN). Residues 464 to 484 (ASQVVLSIVLPFLVAPLIFFT) form a helical membrane-spanning segment. Residues 485-543 (CKKSIMKTEITVDHTEEDSHNHQNNNDRSAGSVIEQDGSSGMEIENGKDVKIVYMANNW) lie on the Cytoplasmic side of the membrane. The interval 498–517 (HTEEDSHNHQNNNDRSAGSV) is disordered. Residues 544–564 (IITVIAIIVWLFLSLLNVYAI) traverse the membrane as a helical segment. Residues 565–575 (VQLGMSHGDIS) are Extracellular-facing.

It belongs to the NRAMP family.

The protein localises to the cell membrane. The enzyme catalyses Mn(2+)(in) = Mn(2+)(out). Its function is as follows. High-affinity manganese transporter involved in manganese uptake from the extracellular environment. Also contributes to cellular accumulation of other divalent metal ions such as cadmium, cobalt, copper, iron and nickel. The polypeptide is Manganese transporter SMF1 (SMF1) (Saccharomyces cerevisiae (strain ATCC 204508 / S288c) (Baker's yeast)).